Here is a 174-residue protein sequence, read N- to C-terminus: F-box protein At1g70360 (174 aa).

The region spanning 136–174 (PPCFISLPRELKHKILESLPGVDIGTLACVSSELRDMAS) is the F-box domain.

The chain is F-box protein At1g70360 from Arabidopsis thaliana (Mouse-ear cress).